A 309-amino-acid polypeptide reads, in one-letter code: Porphobilinogen deaminase (309 aa).

The residue at position 242 (C242) is an S-(dipyrrolylmethanemethyl)cysteine.

Belongs to the HMBS family. In terms of assembly, monomer. It depends on dipyrromethane as a cofactor.

It carries out the reaction 4 porphobilinogen + H2O = hydroxymethylbilane + 4 NH4(+). It participates in porphyrin-containing compound metabolism; protoporphyrin-IX biosynthesis; coproporphyrinogen-III from 5-aminolevulinate: step 2/4. In terms of biological role, tetrapolymerization of the monopyrrole PBG into the hydroxymethylbilane pre-uroporphyrinogen in several discrete steps. This Pseudoalteromonas atlantica (strain T6c / ATCC BAA-1087) protein is Porphobilinogen deaminase.